Here is a 213-residue protein sequence, read N- to C-terminus: MTLTMAMPKGRIFEEAVQLLRSAGYNLPSSFEQSRKLIIDVPNESLRFILAKPMDVPTYVEHGVADVGVAGKDVMLEEKRDVHEVLDLNISACHLAVAALPTYQRGELNPKVASKYPNVASQFFKEQGEQVEIIKLNGSIELAPIMGLAGRIVDIVSTGQTLKENGLVELEQIRKITSRFIVNPASYRMRAGEIHDMVERLATVIEGDGSEDH.

Belongs to the ATP phosphoribosyltransferase family. Short subfamily. As to quaternary structure, heteromultimer composed of HisG and HisZ subunits.

It localises to the cytoplasm. The catalysed reaction is 1-(5-phospho-beta-D-ribosyl)-ATP + diphosphate = 5-phospho-alpha-D-ribose 1-diphosphate + ATP. It functions in the pathway amino-acid biosynthesis; L-histidine biosynthesis; L-histidine from 5-phospho-alpha-D-ribose 1-diphosphate: step 1/9. Its function is as follows. Catalyzes the condensation of ATP and 5-phosphoribose 1-diphosphate to form N'-(5'-phosphoribosyl)-ATP (PR-ATP). Has a crucial role in the pathway because the rate of histidine biosynthesis seems to be controlled primarily by regulation of HisG enzymatic activity. The polypeptide is ATP phosphoribosyltransferase (Shouchella clausii (strain KSM-K16) (Alkalihalobacillus clausii)).